The following is a 525-amino-acid chain: GMP synthase [glutamine-hydrolyzing] (525 aa).

Residues 8-207 (KILILDFGSQ…ALDICGCDAN (200 aa)) form the Glutamine amidotransferase type-1 domain. Catalysis depends on Cys85, which acts as the Nucleophile. Residues His181 and Glu183 contribute to the active site. In terms of domain architecture, GMPS ATP-PPase spans 208–400 (WKPSSIIEDA…LGLPYDMLYR (193 aa)). 235–241 (SGGVDSS) is a binding site for ATP.

In terms of assembly, homodimer.

It carries out the reaction XMP + L-glutamine + ATP + H2O = GMP + L-glutamate + AMP + diphosphate + 2 H(+). It functions in the pathway purine metabolism; GMP biosynthesis; GMP from XMP (L-Gln route): step 1/1. In terms of biological role, catalyzes the synthesis of GMP from XMP. The protein is GMP synthase [glutamine-hydrolyzing] of Shewanella piezotolerans (strain WP3 / JCM 13877).